A 698-amino-acid polypeptide reads, in one-letter code: Auxin response factor 22 (698 aa).

The segment at residues 128 to 230 (FAKTLTQSDA…ELCVGIRRAK (103 aa)) is a DNA-binding region (TF-B3). Positions 549–577 (TSSGSTETLSPGVTGNSSPNGNAHKTGNA) are enriched in polar residues. A disordered region spans residues 549–579 (TSSGSTETLSPGVTGNSSPNGNAHKTGNASD). One can recognise a PB1 domain in the interval 603-683 (AGHCKVFMES…RRLTIIAGDR (81 aa)).

This sequence belongs to the ARF family. Homodimers and heterodimers. Expressed in roots, culms, leaves and young panicles.

It is found in the nucleus. Functionally, auxin response factors (ARFs) are transcriptional factors that bind specifically to the DNA sequence 5'-TGTCTC-3' found in the auxin-responsive promoter elements (AuxREs). The sequence is that of Auxin response factor 22 (ARF22) from Oryza sativa subsp. japonica (Rice).